Reading from the N-terminus, the 304-residue chain is Mas-related G-protein coupled receptor member A (304 aa).

Residues 1–17 (MDKTIPGSFNSRTLIPN) lie on the Extracellular side of the membrane. Residues 18-38 (LLIIISGLVGLIGNAMVFWLL) form a helical membrane-spanning segment. The Cytoplasmic segment spans residues 39 to 46 (GFRLARNA). The helical transmembrane segment at 47 to 67 (FSVYILNLALADFLFLLCHII) threads the bilayer. Over 68 to 80 (DSTLLLLKFSYPN) the chain is Extracellular. Residues 81 to 101 (IIFLPCFNTVMMVPYIAGLSM) form a helical membrane-spanning segment. Residues 102–132 (LSAISTERCLSVVCPIWYRCRRPKHTSTVMC) are Cytoplasmic-facing. Residues 133–153 (SAIWVLSLLICILNRYFCGFL) form a helical membrane-spanning segment. Topologically, residues 154 to 167 (DTKYEKDNRCLASN) are extracellular. Residues 168–188 (FFTAACLIFLFVVLCLSSLAL) traverse the membrane as a helical segment. Over 189 to 211 (LVRLFCGAGRMKLTRLYATIMLT) the chain is Cytoplasmic. The chain crosses the membrane as a helical span at residues 212 to 232 (VLVFLLCGLPFGIHWFLLIWI). Residues 233-244 (KIDYGKFAYGLY) lie on the Extracellular side of the membrane. A helical transmembrane segment spans residues 245–265 (LAALVLTAVNSCANPIIYFFV). Residues 266 to 304 (GSFRHQKHQTLKMVLQRALQDTPETAENTVEMSSSKVEP) lie on the Cytoplasmic side of the membrane.

It belongs to the G-protein coupled receptor 1 family. Mas subfamily. Expressed in a subset of IB4-positive small diameter nociceptive dorsal root neurons.

The protein localises to the cell membrane. In terms of biological role, orphan receptor activated by a subset of RFamide-family neuropeptides such as FLRF-amide and FMRF-amide. Mediates its action by association with G proteins that activate a phosphatidylinositol-calcium second messenger system. Its effect is mediated by G(q) and G(11) proteins. May regulate the function of nociceptive neurons by modulation of pain perception. The protein is Mas-related G-protein coupled receptor member A (Mrgpra) of Rattus norvegicus (Rat).